A 452-amino-acid polypeptide reads, in one-letter code: uncharacterized protein (452 aa).

7 helical membrane-spanning segments follow: residues 18–38 (PIIE…VLAK), 81–101 (LLPV…FLLA), 269–289 (IVLL…ALFI), 317–337 (AGQV…ATDI), 354–374 (VIIV…LPAF), 390–410 (VFVV…LTQI), and 428–448 (SYAV…LLVV).

Belongs to the auxin efflux carrier (TC 2.A.69) family.

It localises to the membrane. This is an uncharacterized protein from Schizosaccharomyces pombe (strain 972 / ATCC 24843) (Fission yeast).